The following is a 555-amino-acid chain: CTL-like protein DDB_G0274487 (555 aa).

A compositionally biased stretch (polar residues) spans 1 to 17 (MGIEDNSQQPNTGSPYG). The segment at 1–101 (MGIEDNSQQP…NLNKANDRES (101 aa)) is disordered. The segment covering 19 to 63 (SPPSQYNPYGQQPPQQQQYNPYGEQQQQPQQQQQYGYQPQFQPTY) has biased composition (low complexity). Residues 79-90 (PFPPQQQQPPPI) are compositionally biased toward pro residues. N116 carries N-linked (GlcNAc...) asparagine glycosylation. The helical transmembrane segment at 138 to 158 (IWFSILFGLNFGLLIVVSASA) threads the bilayer. An N-linked (GlcNAc...) asparagine glycan is attached at N174. 10 helical membrane passes run 182–202 (FLFAILPFTIVFSLLYIWAWL), 210–230 (ESLIKYSFFGAMGLMIGYCVF), 231–251 (FFVWGAIYLGIIFAIMAFFII), 284–304 (AGYVSIFINFVWFIVWGSAFA), 313–333 (AIQTCINIYLVFTLYWVFHVI), 340–360 (TVSGLLATWYFCSGPNGVGMP), 372–392 (LTTSFGSICFGSLIISLIETL), 405–425 (VVVKIIGYIFNCILSMLSSIV), 472–492 (IAIGGLVASLLLSILGALISI), and 493–513 (PFDMSVYGGALALFIGYLVII).

It belongs to the CTL (choline transporter-like) family.

The protein localises to the membrane. This is CTL-like protein DDB_G0274487 from Dictyostelium discoideum (Social amoeba).